Reading from the N-terminus, the 346-residue chain is Putative toluene-4-sulfonate monooxygenase system iron-sulfur subunit TsaM2 (346 aa).

Residues 7 to 108 (WYVAGMATDC…LVERHGLLWI (102 aa)) enclose the Rieske domain. [2Fe-2S] cluster is bound by residues Cys-47, His-49, Cys-66, and His-69.

In terms of assembly, homotetramer. Part of the p-toluenesulfonate methyl-monooxygenase complex TsaBM, comprising the reductase TsaB and the oxygenase TsaM. Requires [2Fe-2S] cluster as cofactor.

It catalyses the reaction toluene-4-sulfonate + NADH + O2 + H(+) = 4-(hydroxymethyl)benzenesulfonate + NAD(+) + H2O. In terms of biological role, involved in the toluene-4-sulfonate degradation pathway. Does not discriminate between the sulfonate and the carboxyl substituents and can also be involved in the p-toluenecarboxylate degradation pathway. In Comamonas testosteroni (Pseudomonas testosteroni), this protein is Putative toluene-4-sulfonate monooxygenase system iron-sulfur subunit TsaM2 (tsaM2).